Consider the following 117-residue polypeptide: Minor capsid protein p17 (117 aa).

N-linked (GlcNAc...) asparagine; by host glycosylation occurs at Asn12. The chain crosses the membrane as a helical span at residues 39–59 (AILLGILILLVIILIIVAIVY). The segment at 96 to 117 (KNSTSQQSHIPSDEQLAELAHS) is disordered. Asn97 carries N-linked (GlcNAc...) asparagine; by host glycosylation.

The protein belongs to the asfivirus minor capsid protein p17 family. In terms of assembly, interacts with the minor capsid protein M1249L and with the hexon capsid protein p72 capsomers; these interactions form a rigid zipper structure that stabilizes the capsomers. Interacts with host STING1.

The protein localises to the virion membrane. It localises to the host endoplasmic reticulum membrane. In terms of biological role, together with the penton and the other minor capsid proteins (M1249L, p49), forms a complicated network immediately below the outer capsid shell, stabilizing the whole capsid. Three copies of p17 encircle each p72 capsomer in the inner capsid shell, anchoring p72 capsomers on the inner membrane. Required for the assembly of the capsid and icosahedral morphogenesis. Additionally, inhibits the host cGAS-STING pathway through its interaction with STING1 and subsequent interference of the recruitment of downstream components TBK1 and IKBKE. In African swine fever virus (isolate Tick/South Africa/Pretoriuskop Pr4/1996) (ASFV), this protein is Minor capsid protein p17.